The following is a 350-amino-acid chain: Blue-sensitive opsin (350 aa).

At 1–36 (MNGTEGPNFYVPMSNATGVVRSPFEYPQYYLAEPWA) the chain is on the extracellular side. Residues asparagine 2 and asparagine 15 are each glycosylated (N-linked (GlcNAc...) asparagine). The helical transmembrane segment at 37-61 (FSILAAYMFFLIITGFPINFLTLYV) threads the bilayer. Residues 62–73 (TIEHKKLRTPLN) lie on the Cytoplasmic side of the membrane. Residues 74–98 (YILLNLAVADLFMVFGGFTTTMYTS) form a helical membrane-spanning segment. Residues 99–113 (MHGYFVFGETGCNLE) are Extracellular-facing. The cysteines at positions 110 and 187 are disulfide-linked. A helical membrane pass occupies residues 114–133 (GYFATLGGEISLWSLVVLAI). The Cytoplasmic segment spans residues 134 to 152 (ERWVVVCKPISNFRFGENH). The helical transmembrane segment at 153-176 (AIMGLTLTWVMANACAMPPLFGWS) threads the bilayer. Over 177 to 202 (RYIPEGLQCSCGIDYYTLKPEVNNES) the chain is Extracellular. An N-linked (GlcNAc...) asparagine glycan is attached at asparagine 200. Residues 203–230 (FVIYMFLVHFTIPLTIISFCYGRLVCAV) form a helical membrane-spanning segment. At 231 to 252 (KEAAAQQQESETTQRAEREVTR) the chain is on the cytoplasmic side. Residues 253–276 (MVVIMVISFLVCWIPYASVAWYIF) traverse the membrane as a helical segment. Over 277–284 (THQGSTFG) the chain is Extracellular. Residues 285–309 (PIFMTVPSFFAKSSSIYNPMIYICM) traverse the membrane as a helical segment. Residue lysine 296 is modified to N6-(retinylidene)lysine. The Cytoplasmic portion of the chain corresponds to 310-350 (NKQFRNCMITTLFCGKNPFEGEEEGSTTKTEASAVSSVSPA). The disordered stretch occupies residues 330-350 (GEEEGSTTKTEASAVSSVSPA).

Belongs to the G-protein coupled receptor 1 family. Opsin subfamily. Post-translationally, phosphorylated on some or all of the serine and threonine residues present in the C-terminal region. As to expression, rod shaped photoreceptor cells which mediates vision in dim light.

The protein resides in the membrane. In terms of biological role, visual pigments are the light-absorbing molecules that mediate vision. They consist of an apoprotein, opsin, covalently linked to cis-retinal. This is Blue-sensitive opsin from Conger conger (Conger eel).